We begin with the raw amino-acid sequence, 173 residues long: Acireductone dioxygenase (173 aa).

The interval 1–21 (MKFYYHDNDSSVDQCAPHDSG) is disordered. 4 residues coordinate Fe(2+): His84, His86, Glu90, and His129. His84, His86, Glu90, and His129 together coordinate Ni(2+).

This sequence belongs to the acireductone dioxygenase (ARD) family. Fe(2+) serves as cofactor. It depends on Ni(2+) as a cofactor.

The protein resides in the cytoplasm. It is found in the nucleus. The enzyme catalyses 1,2-dihydroxy-5-(methylsulfanyl)pent-1-en-3-one + O2 = 4-methylsulfanyl-2-oxobutanoate + formate + 2 H(+). It catalyses the reaction 1,2-dihydroxy-5-(methylsulfanyl)pent-1-en-3-one + O2 = 3-(methylsulfanyl)propanoate + CO + formate + 2 H(+). It functions in the pathway amino-acid biosynthesis; L-methionine biosynthesis via salvage pathway; L-methionine from S-methyl-5-thio-alpha-D-ribose 1-phosphate: step 5/6. Functionally, catalyzes 2 different reactions between oxygen and the acireductone 1,2-dihydroxy-3-keto-5-methylthiopentene (DHK-MTPene) depending upon the metal bound in the active site. Fe-containing acireductone dioxygenase (Fe-ARD) produces formate and 2-keto-4-methylthiobutyrate (KMTB), the alpha-ketoacid precursor of methionine in the methionine recycle pathway. Ni-containing acireductone dioxygenase (Ni-ARD) produces methylthiopropionate, carbon monoxide and formate, and does not lie on the methionine recycle pathway. In Yarrowia lipolytica (strain CLIB 122 / E 150) (Yeast), this protein is Acireductone dioxygenase.